The sequence spans 421 residues: Inner membrane transport protein YdiN (421 aa).

At 1-9 the chain is on the cytoplasmic side; it reads MSQNKAFST. The chain crosses the membrane as a helical span at residues 10–30; that stretch reads PFILAVLCIYFSYFLHGISVI. Residues 31–49 are Periplasmic-facing; it reads TLAQNMSSLAEKFSTDNAG. Residues 50–70 traverse the membrane as a helical segment; that stretch reads IAYLISGIGLGRLISILFFGV. Over 71–78 the chain is Cytoplasmic; the sequence is ISDKFGRR. Residues 79 to 99 traverse the membrane as a helical segment; the sequence is AVILMAVIMYLLFFFGIPACP. Residue N100 is a topological domain, periplasmic. Residues 101–121 traverse the membrane as a helical segment; that stretch reads LTLAYGLAVCVGIANSALDTG. Over 122 to 136 the chain is Cytoplasmic; it reads GYPALMECFPKASGS. Residues 137-157 traverse the membrane as a helical segment; it reads AVILVKAMVSFGQMFYPMLVS. The Periplasmic segment spans residues 158-163; sequence YMLLNN. A helical transmembrane segment spans residues 164 to 184; the sequence is IWYGYGLIIPGILFVLITLML. Residues 185–215 lie on the Cytoplasmic side of the membrane; the sequence is LKSKFPSQLVDASVTNELPQMNSKPLVWLEG. A helical transmembrane segment spans residues 216-236; sequence VSSVLFGVAAFSTFYVIVVWM. Over 237–251 the chain is Periplasmic; the sequence is PKYAMAFAGMSEAEA. Residues 252–272 traverse the membrane as a helical segment; the sequence is LKTISYYSMGSLVCVFIFAAL. Residues 273 to 279 lie on the Cytoplasmic side of the membrane; it reads LKKMVRP. A helical membrane pass occupies residues 280–300; sequence IWANVFNSALATITAAIIYLY. Residues 301–308 lie on the Periplasmic side of the membrane; the sequence is PSPLVCNA. The helical transmembrane segment at 309-329 threads the bilayer; the sequence is GAFVIGFSAAGGILQLGVSVM. The Cytoplasmic portion of the chain corresponds to 330 to 342; that stretch reads SEFFPKSKAKVTS. Residues 343 to 363 form a helical membrane-spanning segment; that stretch reads IYMMMGGLANFVIPLITGYLS. The Periplasmic portion of the chain corresponds to 364–369; the sequence is NIGLQY. Residues 370–390 form a helical membrane-spanning segment; the sequence is IIVLDFTFALLALITAIIVFI. The Cytoplasmic portion of the chain corresponds to 391 to 421; the sequence is RYYRVFIIPENDVRFGERKFCTRLNTIKHRG.

It belongs to the major facilitator superfamily.

It is found in the cell inner membrane. The chain is Inner membrane transport protein YdiN (ydiN) from Escherichia coli (strain K12).